Consider the following 287-residue polypeptide: 4-hydroxybenzoate octaprenyltransferase (287 aa).

9 helical membrane-spanning segments follow: residues 22–42 (IGTY…SDGW), 45–65 (LQLL…GCVI), 95–115 (AINL…MLSW), 116–136 (STIY…FMKR), 140–160 (LPQL…FSEA), 162–182 (GEIP…TIAY), 214–234 (IGFL…ILAF), 237–257 (PYQL…LLIV), and 264–284 (CFQA…GIAI).

The protein belongs to the UbiA prenyltransferase family. Mg(2+) is required as a cofactor.

The protein resides in the cell inner membrane. The catalysed reaction is all-trans-octaprenyl diphosphate + 4-hydroxybenzoate = 4-hydroxy-3-(all-trans-octaprenyl)benzoate + diphosphate. It participates in cofactor biosynthesis; ubiquinone biosynthesis. Its function is as follows. Catalyzes the prenylation of para-hydroxybenzoate (PHB) with an all-trans polyprenyl group. Mediates the second step in the final reaction sequence of ubiquinone-8 (UQ-8) biosynthesis, which is the condensation of the polyisoprenoid side chain with PHB, generating the first membrane-bound Q intermediate 3-octaprenyl-4-hydroxybenzoate. In Colwellia psychrerythraea (strain 34H / ATCC BAA-681) (Vibrio psychroerythus), this protein is 4-hydroxybenzoate octaprenyltransferase.